Here is a 332-residue protein sequence, read N- to C-terminus: Ferredoxin--NADP reductase 1 (332 aa).

Positions 35, 43, 48, 88, 123, 284, and 325 each coordinate FAD.

Belongs to the ferredoxin--NADP reductase type 2 family. Homodimer. It depends on FAD as a cofactor.

It carries out the reaction 2 reduced [2Fe-2S]-[ferredoxin] + NADP(+) + H(+) = 2 oxidized [2Fe-2S]-[ferredoxin] + NADPH. This is Ferredoxin--NADP reductase 1 from Listeria innocua serovar 6a (strain ATCC BAA-680 / CLIP 11262).